The chain runs to 483 residues: MKFIIKLFPEITIKSQSVRLRFIKILTTNIRNVLKHLEDDTLAIVRHWDHIELRTKDGNLGPEICDALTRIPGIHHILEVEDRSYSDMHNIFEQTLEAYRETLVGKTFCVRVKRRGKHEFSSGDVERYVGGGLNQHIESAKVNLTRPQVTVNLEVDQDKLILVKARHEGLGGFPIGTQEDVLSLISGGFDSGVSSYMLMRRGCRVHYCFFNLGGSAHEIGVKQVAHYLWNRFGSSHRVRFIAIDFEPVVGEILEKVEDGQMGVVLKRMMVRAASQVAERYGVQALVTGEALGQVSSQTLTNLRLIDNASDTLILRPLISHDKEHIINLARQIGTEDFAKTMPEYCGVISKSPTVKAVKAKIEEEESHFDFSILDRVVSEAKNVDIREIAQQSREQVVEVETVAELADTDVLLDIRAPDEQEEKPLKLDQVEVRSLPFYKLSSQFADLDQSKTYLLYCDRGVMSRLQALYLREQGYTNVKVYRP.

Positions 62 to 166 constitute a THUMP domain; that stretch reads PEICDALTRI…QDKLILVKAR (105 aa). ATP-binding positions include 184 to 185, Lys266, Gly288, and Gln297; that span reads LI. Cys345 and Cys457 are disulfide-bonded. The Rhodanese domain occupies 405 to 483; that stretch reads LADTDVLLDI…GYTNVKVYRP (79 aa). Cys457 functions as the Cysteine persulfide intermediate in the catalytic mechanism.

Belongs to the ThiI family.

It localises to the cytoplasm. The catalysed reaction is [ThiI sulfur-carrier protein]-S-sulfanyl-L-cysteine + a uridine in tRNA + 2 reduced [2Fe-2S]-[ferredoxin] + ATP + H(+) = [ThiI sulfur-carrier protein]-L-cysteine + a 4-thiouridine in tRNA + 2 oxidized [2Fe-2S]-[ferredoxin] + AMP + diphosphate. It carries out the reaction [ThiS sulfur-carrier protein]-C-terminal Gly-Gly-AMP + S-sulfanyl-L-cysteinyl-[cysteine desulfurase] + AH2 = [ThiS sulfur-carrier protein]-C-terminal-Gly-aminoethanethioate + L-cysteinyl-[cysteine desulfurase] + A + AMP + 2 H(+). It participates in cofactor biosynthesis; thiamine diphosphate biosynthesis. Functionally, catalyzes the ATP-dependent transfer of a sulfur to tRNA to produce 4-thiouridine in position 8 of tRNAs, which functions as a near-UV photosensor. Also catalyzes the transfer of sulfur to the sulfur carrier protein ThiS, forming ThiS-thiocarboxylate. This is a step in the synthesis of thiazole, in the thiamine biosynthesis pathway. The sulfur is donated as persulfide by IscS. The polypeptide is tRNA sulfurtransferase (Yersinia pseudotuberculosis serotype IB (strain PB1/+)).